A 201-amino-acid polypeptide reads, in one-letter code: Small ribosomal subunit protein uS4 (201 aa).

Residues 19–41 (LVGGSSAYEKRPYPPGQHGRARI) form a disordered region. The S4 RNA-binding domain occupies 91–157 (SRLDNVVYRA…LPFEVARETA (67 aa)).

This sequence belongs to the universal ribosomal protein uS4 family. In terms of assembly, part of the 30S ribosomal subunit. Contacts protein S5. The interaction surface between S4 and S5 is involved in control of translational fidelity.

Its function is as follows. One of the primary rRNA binding proteins, it binds directly to 16S rRNA where it nucleates assembly of the body of the 30S subunit. Functionally, with S5 and S12 plays an important role in translational accuracy. This is Small ribosomal subunit protein uS4 from Mycobacteroides abscessus (strain ATCC 19977 / DSM 44196 / CCUG 20993 / CIP 104536 / JCM 13569 / NCTC 13031 / TMC 1543 / L948) (Mycobacterium abscessus).